Consider the following 166-residue polypeptide: EndA-like protein (166 aa).

Belongs to the tRNA-intron endonuclease family. Archaeal short subfamily.

In Methanopyrus kandleri (strain AV19 / DSM 6324 / JCM 9639 / NBRC 100938), this protein is EndA-like protein.